The chain runs to 448 residues: Major capsid protein (448 aa).

Residues 104–127 (ITKEKQYDAEEAEHKVFEREMPNV) adopt a coiled-coil conformation. Residues 348-425 (AVTQVIVSPN…ATVDIGTEDK (78 aa)) enclose the BIG2 domain.

It belongs to the phi29likevirus major capsid protein family. In terms of assembly, homohexamer. Homopentamer. The prolate capsid is composed of pentamers and hexamers of the capsid protein.

Its subcellular location is the virion. Assembles to form a prolate capsid shell of about 54 nm in length and 45 nm in width, with a T=3, Q=5 symmetry. This chain is Major capsid protein (8), found in Bacillus subtilis (Bacteriophage PZA).